Reading from the N-terminus, the 181-residue chain is Large ribosomal subunit protein uL10 (181 aa).

It belongs to the universal ribosomal protein uL10 family. In terms of assembly, part of the ribosomal stalk of the 50S ribosomal subunit. The N-terminus interacts with L11 and the large rRNA to form the base of the stalk. The C-terminus forms an elongated spine to which L12 dimers bind in a sequential fashion forming a multimeric L10(L12)X complex.

Forms part of the ribosomal stalk, playing a central role in the interaction of the ribosome with GTP-bound translation factors. The polypeptide is Large ribosomal subunit protein uL10 (Amoebophilus asiaticus (strain 5a2)).